A 517-amino-acid polypeptide reads, in one-letter code: Mucin-like protein 3 (517 aa).

Positions 1-29 (MAQPVHSLCSAFGLQCCLLFLLASWGAGA) are cleaved as a signal peptide. Residues 30-448 (TTFQEYQKTG…GENDSFPAWA (419 aa)) are Extracellular-facing. Residues 67 to 341 (SGQRPPELPK…PTENLGNTTL (275 aa)) are disordered. Residues 83-93 (QKRHCNTTRHS) show a composition bias toward basic residues. N-linked (GlcNAc...) asparagine glycosylation is present at N88. Over residues 105-116 (TIDHKSSTDNHE) the composition is skewed to basic and acidic residues. N-linked (GlcNAc...) asparagine glycosylation occurs at N124. The span at 169-179 (RKSTTGKSTVT) shows a compositional bias: polar residues. Positions 180–190 (RKSDKTGRPLE) are enriched in basic and acidic residues. The span at 194–213 (STLDKTSTSSHKTTTSFHNS) shows a compositional bias: low complexity. 3 stretches are compositionally biased toward polar residues: residues 214–225 (GNSQTKQKSTSF), 232–243 (ASKTTYKTTGTP), and 263–283 (TKTTKNIQETISANELTQSLA). Residues 305–317 (TENRERTANENKK) are compositionally biased toward basic and acidic residues. Residue N338 is glycosylated (N-linked (GlcNAc...) asparagine). A helical transmembrane segment spans residues 449-469 (IVIVVLVAVILLLVFLGLIFL). The Cytoplasmic segment spans residues 470 to 517 (VSYMMRTRRTLTQNTQYNDAEDEGGPNSYPVYLMEQQNLGMGQIPSPR).

Detected in lung, esophagus, stomach, rectum, skin, cervix, testis, kidney, uterus and small intestine. Expressed in pancreas (at protein level).

The protein localises to the cell membrane. It localises to the cytoplasm. May modulate NF-kappaB signaling and play a role in cell growth. The chain is Mucin-like protein 3 from Homo sapiens (Human).